We begin with the raw amino-acid sequence, 852 residues long: MTSIQERGTSAHLHSLKEGEASDRSSEMLPKQRSIIGSHVQRPPSQTTLGRSRAGSNTMNKVSGLDIARRPSENLLSNMNCSDNGNGGNMLNSFVNSALPPPKVNPAQTRRERPASNSSIGTKTTEVFSSTSASSSLGDTSDEGEGSDADKSKINTFPSILMEKATQGRGANGNGMRSASNNTIVEATTDGSKMALQKSMSFDDTAAEKTMNKSRHSYQEQFSSKKSQSSLLNSKQRSRAKSQTCSSTGYNNSSILKTFGISSKISNSSDRIEASSLEFNVPSQKPLNCKPLTPSQKYRLRKEQSEMNLRNTIKRKEKFYDSQEQILELQEGDVDDSLIWNVPMASLSTNSFLASAKPDDMNNLAGKNDLSEYTGGLVNDNSEISYTKQNHRYSNISFASTTSNASLLDFNEMPTSPIPGLNKVTDFQFIQDTTKSLASVYLHSSNRLSRSKLSERTKSSDFLPIELKEAQNQGMEDLILVSENKLDVVSHSRPSWLPPKDRQEKKLHERQINKSMSVASLDQLGKNKDREEKLIRDETNRQKYVLLLDRDITRNSSLQSLSKMVWDTPFSDETRSTIYSEILQSKTRFITKNYIQPFHELQELLTKMGDFPKNKEIEISQLIETSLRRKVSGLHDICPDLMLLLKIKSISSQGIVTGDELLFHHFLVSESFQNLGLNEIWNIVNLVQMTCFNDLCKEKFDAKVLERKGVVAGYLSQNEEFKDEFNTECINSTTWWNILERIDHKLFMWIMDIIVVNNSQSYKNSPINEDEFVNKDWEYYRSKKVVINYKILISFALNVLLNYHFGFTDLRSLCNVNDQRFCIPVFINDEFVDADTVNAVFIKKWAHYYKKF.

Residues 1–158 form a disordered region; that stretch reads MTSIQERGTS…ADKSKINTFP (158 aa). Residues 15–26 are compositionally biased toward basic and acidic residues; the sequence is SLKEGEASDRSS. Positions 43 to 61 are enriched in polar residues; it reads PPSQTTLGRSRAGSNTMNK. S72 is subject to Phosphoserine. Polar residues predominate over residues 74–96; the sequence is NLLSNMNCSDNGNGGNMLNSFVN. Residues 124–139 show a composition bias toward low complexity; it reads TTEVFSSTSASSSLGD. S201 is subject to Phosphoserine. The segment at 206–248 is disordered; it reads AAEKTMNKSRHSYQEQFSSKKSQSSLLNSKQRSRAKSQTCSST. The span at 224–235 shows a compositional bias: low complexity; the sequence is SKKSQSSLLNSK. A phosphoserine mark is found at S459, S517, and S520.

It belongs to the SBE2 family.

The protein localises to the cytoplasm. Its subcellular location is the golgi apparatus. Functionally, with SBE2, is involved in cell wall integrity and polarity processes like bud growth, through the transport of CHS3 and UTR2 to sites of growth. This is Protein SBE22 (SBE22) from Saccharomyces cerevisiae (strain YJM789) (Baker's yeast).